The sequence spans 612 residues: Dihydroxy-acid dehydratase (612 aa).

D81 is a binding site for Mg(2+). C122 serves as a coordination point for [2Fe-2S] cluster. Residues D123 and K124 each contribute to the Mg(2+) site. Residue K124 is modified to N6-carboxylysine. Residue C195 coordinates [2Fe-2S] cluster. E491 serves as a coordination point for Mg(2+). S517 acts as the Proton acceptor in catalysis.

It belongs to the IlvD/Edd family. Homodimer. [2Fe-2S] cluster serves as cofactor. The cofactor is Mg(2+).

It carries out the reaction (2R)-2,3-dihydroxy-3-methylbutanoate = 3-methyl-2-oxobutanoate + H2O. It catalyses the reaction (2R,3R)-2,3-dihydroxy-3-methylpentanoate = (S)-3-methyl-2-oxopentanoate + H2O. It functions in the pathway amino-acid biosynthesis; L-isoleucine biosynthesis; L-isoleucine from 2-oxobutanoate: step 3/4. It participates in amino-acid biosynthesis; L-valine biosynthesis; L-valine from pyruvate: step 3/4. Functions in the biosynthesis of branched-chain amino acids. Catalyzes the dehydration of (2R,3R)-2,3-dihydroxy-3-methylpentanoate (2,3-dihydroxy-3-methylvalerate) into 2-oxo-3-methylpentanoate (2-oxo-3-methylvalerate) and of (2R)-2,3-dihydroxy-3-methylbutanoate (2,3-dihydroxyisovalerate) into 2-oxo-3-methylbutanoate (2-oxoisovalerate), the penultimate precursor to L-isoleucine and L-valine, respectively. This Sinorhizobium fredii (strain NBRC 101917 / NGR234) protein is Dihydroxy-acid dehydratase.